A 318-amino-acid polypeptide reads, in one-letter code: Isoaspartyl peptidase/L-asparaginase (318 aa).

The active-site Nucleophile is the Thr-180. Substrate-binding positions include 208 to 211 (RVSD) and 229 to 232 (TGIG).

This sequence belongs to the Ntn-hydrolase family. In terms of assembly, heterotetramer of two alpha and two beta chains arranged as a dimer of alpha/beta heterodimers. Cleaved into an alpha and beta chain by autocatalysis; this activates the enzyme. The N-terminal residue of the beta subunit is responsible for the nucleophile hydrolase activity.

The catalysed reaction is Cleavage of a beta-linked Asp residue from the N-terminus of a polypeptide.. Its function is as follows. Degrades proteins damaged by L-isoaspartyl residue formation (also known as beta-Asp residues). Probably performs the final step in the degradation of the reserve polymer cyanophycin (depolymerizes the building block L-beta-Asp-Arg). Also has L-asparaginase activity. The protein is Isoaspartyl peptidase/L-asparaginase of Nostoc sp. (strain PCC 7120 / SAG 25.82 / UTEX 2576).